The primary structure comprises 904 residues: Pyrimidine pathway regulatory protein 1 (904 aa).

Residues M1 to S11 show a composition bias toward basic residues. Positions M1–I27 are disordered. Residues N12–D21 are compositionally biased toward basic and acidic residues. Positions 34, 37, 44, 51, 54, and 61 each coordinate Zn(2+). Positions C34–C61 form a DNA-binding region, zn(2)-C6 fungal-type. The segment at G883–F904 is disordered.

As to quaternary structure, binds DNA as a homodimer.

It is found in the nucleus. Positive regulator of URA1 and URA3 expression. The polypeptide is Pyrimidine pathway regulatory protein 1 (PPR1) (Saccharomyces cerevisiae (strain ATCC 204508 / S288c) (Baker's yeast)).